Reading from the N-terminus, the 58-residue chain is Large ribosomal subunit protein uL30 (58 aa).

The protein belongs to the universal ribosomal protein uL30 family. Part of the 50S ribosomal subunit.

This chain is Large ribosomal subunit protein uL30, found in Erythrobacter litoralis (strain HTCC2594).